The chain runs to 276 residues: Nickel import system permease protein NikC (276 aa).

The next 5 membrane-spanning stretches (helical) occupy residues 10–30 (LIFF…FFVS), 73–93 (LFVT…LGLF), 108–128 (FIDV…ASFF), 186–206 (IIPA…LYIS), and 238–258 (IMLI…NLTG). An ABC transmembrane type-1 domain is found at 69–258 (ARSTLFVTVL…ITILIFNLTG (190 aa)).

Belongs to the binding-protein-dependent transport system permease family. OppBC subfamily. The complex is composed of two ATP-binding proteins (NikD and NikE), two transmembrane proteins (NikB and NikC) and a solute-binding protein (NikA).

Its subcellular location is the cell membrane. In terms of biological role, part of the ABC transporter complex NikABCDE (Opp2) involved in nickel import. Probably responsible for the translocation of the substrate across the membrane. The sequence is that of Nickel import system permease protein NikC from Staphylococcus aureus (strain USA300).